The following is a 209-amino-acid chain: Imidazole glycerol phosphate synthase subunit HisH (209 aa).

Residues 3 to 209 (KIAIIDYGMG…SILKNFGEMK (207 aa)) form the Glutamine amidotransferase type-1 domain. Cys-81 (nucleophile) is an active-site residue. Catalysis depends on residues His-190 and Glu-192.

In terms of assembly, heterodimer of HisH and HisF.

It localises to the cytoplasm. The enzyme catalyses 5-[(5-phospho-1-deoxy-D-ribulos-1-ylimino)methylamino]-1-(5-phospho-beta-D-ribosyl)imidazole-4-carboxamide + L-glutamine = D-erythro-1-(imidazol-4-yl)glycerol 3-phosphate + 5-amino-1-(5-phospho-beta-D-ribosyl)imidazole-4-carboxamide + L-glutamate + H(+). It catalyses the reaction L-glutamine + H2O = L-glutamate + NH4(+). Its pathway is amino-acid biosynthesis; L-histidine biosynthesis; L-histidine from 5-phospho-alpha-D-ribose 1-diphosphate: step 5/9. Its function is as follows. IGPS catalyzes the conversion of PRFAR and glutamine to IGP, AICAR and glutamate. The HisH subunit catalyzes the hydrolysis of glutamine to glutamate and ammonia as part of the synthesis of IGP and AICAR. The resulting ammonia molecule is channeled to the active site of HisF. This Geobacter sulfurreducens (strain ATCC 51573 / DSM 12127 / PCA) protein is Imidazole glycerol phosphate synthase subunit HisH.